An 857-amino-acid polypeptide reads, in one-letter code: Aminopeptidase N (857 aa).

Residues Glu130 and 264 to 268 each bind substrate; that span reads GAMEN. A Zn(2+)-binding site is contributed by His298. The Proton acceptor role is filled by Glu299. 2 residues coordinate Zn(2+): His302 and Glu321.

The protein belongs to the peptidase M1 family. In terms of assembly, monomer. It depends on Zn(2+) as a cofactor. In terms of processing, the N-terminus is blocked.

The protein localises to the cytoplasm. It catalyses the reaction Release of an N-terminal amino acid, Xaa-|-Yaa- from a peptide, amide or arylamide. Xaa is preferably Ala, but may be most amino acids including Pro (slow action). When a terminal hydrophobic residue is followed by a prolyl residue, the two may be released as an intact Xaa-Pro dipeptide.. Functionally, aminopeptidase with broad substrate specificity to several peptides. Shows strong preference for leucine but also cleaves next to Arg and Lys in peptide-bond-containing substrates. This is Aminopeptidase N (pepN) from Streptomyces lividans.